The following is a 429-amino-acid chain: Glutamate-1-semialdehyde 2,1-aminomutase 2 (429 aa).

The residue at position 268 (Lys268) is an N6-(pyridoxal phosphate)lysine.

This sequence belongs to the class-III pyridoxal-phosphate-dependent aminotransferase family. HemL subfamily. In terms of assembly, homodimer. The cofactor is pyridoxal 5'-phosphate.

It localises to the cytoplasm. It catalyses the reaction (S)-4-amino-5-oxopentanoate = 5-aminolevulinate. Its pathway is porphyrin-containing compound metabolism; protoporphyrin-IX biosynthesis; 5-aminolevulinate from L-glutamyl-tRNA(Glu): step 2/2. The protein is Glutamate-1-semialdehyde 2,1-aminomutase 2 of Staphylococcus aureus (strain USA300).